Here is a 124-residue protein sequence, read N- to C-terminus: Small ribosomal subunit protein uS12 (124 aa).

A 3-methylthioaspartic acid modification is found at D89. Residues 105–124 (QGVKNRKQARSRYGAKKEKS) form a disordered region. Residues 108 to 118 (KNRKQARSRYG) are compositionally biased toward basic residues.

The protein belongs to the universal ribosomal protein uS12 family. Part of the 30S ribosomal subunit. Contacts proteins S8 and S17. May interact with IF1 in the 30S initiation complex.

Its function is as follows. With S4 and S5 plays an important role in translational accuracy. Functionally, interacts with and stabilizes bases of the 16S rRNA that are involved in tRNA selection in the A site and with the mRNA backbone. Located at the interface of the 30S and 50S subunits, it traverses the body of the 30S subunit contacting proteins on the other side and probably holding the rRNA structure together. The combined cluster of proteins S8, S12 and S17 appears to hold together the shoulder and platform of the 30S subunit. This is Small ribosomal subunit protein uS12 from Mycobacteroides abscessus (strain ATCC 19977 / DSM 44196 / CCUG 20993 / CIP 104536 / JCM 13569 / NCTC 13031 / TMC 1543 / L948) (Mycobacterium abscessus).